We begin with the raw amino-acid sequence, 335 residues long: Galactosylgalactosylxylosylprotein 3-beta-glucuronosyltransferase 3 (335 aa).

The Cytoplasmic portion of the chain corresponds to 1–7; it reads MKLKLKN. A helical; Signal-anchor for type II membrane protein transmembrane segment spans residues 8 to 28; that stretch reads VFLAYFLVSIAGLLYALVQLG. Residues 29–335 are Lumenal-facing; it reads QPCDCLPPLR…GQGSDPAIEV (307 aa). Asp196 is a binding site for Mn(2+). The Proton acceptor role is filled by Glu281. Residue Asn300 is glycosylated (N-linked (GlcNAc...) asparagine). A compositionally biased stretch (basic and acidic residues) spans 312–322; that stretch reads EKPKMKQEEQL. The interval 312-335 is disordered; the sequence is EKPKMKQEEQLQRQGQGSDPAIEV.

Belongs to the glycosyltransferase 43 family. In terms of assembly, homodimer; disulfide-linked. Interacts with PXYLP1; the interaction increases the 2-phosphoxylose phosphatase activity of PXYLP1 during completion of linkage region formation in a B3GAT3-mediated manner. Requires Mn(2+) as cofactor. Post-translationally, N-glycosylated. In terms of tissue distribution, liver, brain and heart. Moderate expression seen in lung, skeletal muscle, kidney and testis.

The protein resides in the golgi apparatus membrane. It localises to the golgi apparatus. Its subcellular location is the cis-Golgi network. The enzyme catalyses 3-O-(beta-D-galactosyl-(1-&gt;3)-beta-D-galactosyl-(1-&gt;4)-beta-D-xylosyl)-L-seryl-[protein] + UDP-alpha-D-glucuronate = 3-O-(beta-D-GlcA-(1-&gt;3)-beta-D-Gal-(1-&gt;3)-beta-D-Gal-(1-&gt;4)-beta-D-Xyl)-L-seryl-[protein] + UDP + H(+). It functions in the pathway protein modification; protein glycosylation. In terms of biological role, glycosaminoglycans biosynthesis. Involved in forming the linkage tetrasaccharide present in heparan sulfate and chondroitin sulfate. Transfers a glucuronic acid moiety from the uridine diphosphate-glucuronic acid (UDP-GlcUA) to the common linkage region trisaccharide Gal-beta-1,3-Gal-beta-1,4-Xyl covalently bound to a Ser residue at the glycosaminylglycan attachment site of proteoglycans. Can also play a role in the biosynthesis of l2/HNK-1 carbohydrate epitope on glycoproteins. Highest activity seen with Gal-beta-1,3-Gal-beta-O-R (where R=naphthalenemethanol or benzyl alcohol). Stimulates 2-phosphoxylose phosphatase activity of PXYLP1 in presence of uridine diphosphate-glucuronic acid (UDP-GlcUA) during completion of linkage region formation. This Cricetulus griseus (Chinese hamster) protein is Galactosylgalactosylxylosylprotein 3-beta-glucuronosyltransferase 3 (B3GAT3).